We begin with the raw amino-acid sequence, 314 residues long: MVKKNFIPSVSLVRRDLPTLVTTTTSSTALSKPTSSVVSETSSKSLPSLTSSAFSTSSGATSSSSLIVASITPPSTAGNPFILNAADKPNGTVYIAVGAVIGAIFISILIWWLVSSYLSRRFTMTNSYANDSKNLYRGHHKHSSSLQSNPFDINDEKSYMQDDWDSMSQLESSQYEDAASPFNPIQDPFTDSRRSLFISPTLQVSQYEKSHSRHQSKDTNIFIDDPSLYVGTYLEEEEEEERKLNLNRPQRAASPERKEKKINSMEGYHKRNQSSLGLIPVASATSNTSSPKKAHKRQAPSMFLDDVLNGREII.

The disordered stretch occupies residues 32 to 60 (KPTSSVVSETSSKSLPSLTSSAFSTSSGA). Residues 93-113 (VYIAVGAVIGAIFISILIWWL) form a helical membrane-spanning segment. 3 positions are modified to phosphoserine: Ser-148, Ser-254, and Ser-274. Positions 240–309 (EERKLNLNRP…PSMFLDDVLN (70 aa)) are disordered. A compositionally biased stretch (basic and acidic residues) spans 254-269 (SPERKEKKINSMEGYH).

This sequence belongs to the PRM5 family.

It localises to the vacuole membrane. The polypeptide is Vacuolar membrane protein EC1118_1N9_3125g (Saccharomyces cerevisiae (strain Lalvin EC1118 / Prise de mousse) (Baker's yeast)).